Here is a 527-residue protein sequence, read N- to C-terminus: Peptide chain release factor 3 (527 aa).

The 269-residue stretch at 9–277 (AKRRTFAIIS…AVVDWAPLPL (269 aa)) folds into the tr-type G domain. GTP-binding positions include 18–25 (SHPDAGKT), 86–90 (DTPGH), and 140–143 (NKLD).

It belongs to the TRAFAC class translation factor GTPase superfamily. Classic translation factor GTPase family. PrfC subfamily.

The protein resides in the cytoplasm. Increases the formation of ribosomal termination complexes and stimulates activities of RF-1 and RF-2. It binds guanine nucleotides and has strong preference for UGA stop codons. It may interact directly with the ribosome. The stimulation of RF-1 and RF-2 is significantly reduced by GTP and GDP, but not by GMP. The polypeptide is Peptide chain release factor 3 (Pseudomonas fluorescens (strain ATCC BAA-477 / NRRL B-23932 / Pf-5)).